Here is a 548-residue protein sequence, read N- to C-terminus: Chaperonin GroEL (548 aa).

Residues 30–33, lysine 51, 87–91, glycine 415, and aspartate 496 each bind ATP; these read TLGP and DGTTT.

It belongs to the chaperonin (HSP60) family. In terms of assembly, forms a cylinder of 14 subunits composed of two heptameric rings stacked back-to-back. Interacts with the co-chaperonin GroES.

It localises to the cytoplasm. It catalyses the reaction ATP + H2O + a folded polypeptide = ADP + phosphate + an unfolded polypeptide.. In terms of biological role, together with its co-chaperonin GroES, plays an essential role in assisting protein folding. The GroEL-GroES system forms a nano-cage that allows encapsulation of the non-native substrate proteins and provides a physical environment optimized to promote and accelerate protein folding. In Haemophilus influenzae (strain PittGG), this protein is Chaperonin GroEL.